The sequence spans 1260 residues: uncharacterized protein (1260 aa).

It localises to the plastid. Its subcellular location is the chloroplast. This is an uncharacterized protein from Ostreococcus tauri.